The sequence spans 574 residues: GRB2-associated-binding protein 4 (574 aa).

The disordered stretch occupies residues 1 to 33 (MSLPSPSPSRELCPPDPAFAPLSSWPGSGPAGG). A PH domain is found at 39–152 (HVLYSGWLRK…WVQSICQICG (114 aa)). Disordered regions lie at residues 176–200 (PAEP…PVSH), 215–234 (LRSH…ASFS), 293–331 (SLAS…RPAE), and 418–513 (PPVN…PRST). Residues 181 to 193 (CSHQHLPQEQEPT) are compositionally biased toward polar residues. Composition is skewed to polar residues over residues 302 to 318 (GSLT…SGKY) and 424 to 442 (LKPN…NNRV). Residues 457 to 478 (SGTSHTFDSSSSQHPISTQSIT) show a composition bias toward low complexity. Positions 502–513 (GGTSSSAPPRST) are enriched in polar residues.

Belongs to the GAB family.

The polypeptide is GRB2-associated-binding protein 4 (GAB4) (Homo sapiens (Human)).